Reading from the N-terminus, the 380-residue chain is tRNA-specific 2-thiouridylase MnmA (380 aa).

ATP is bound by residues Ala-26–Ser-33 and Leu-52. Residue Cys-120 is the Nucleophile of the active site. Cysteines 120 and 217 form a disulfide. Residue Gly-144 participates in ATP binding. The interaction with tRNA stretch occupies residues Arg-166 to Gln-168. Residue Cys-217 is the Cysteine persulfide intermediate of the active site.

This sequence belongs to the MnmA/TRMU family.

The protein resides in the cytoplasm. It catalyses the reaction S-sulfanyl-L-cysteinyl-[protein] + uridine(34) in tRNA + AH2 + ATP = 2-thiouridine(34) in tRNA + L-cysteinyl-[protein] + A + AMP + diphosphate + H(+). Catalyzes the 2-thiolation of uridine at the wobble position (U34) of tRNA, leading to the formation of s(2)U34. This Roseobacter denitrificans (strain ATCC 33942 / OCh 114) (Erythrobacter sp. (strain OCh 114)) protein is tRNA-specific 2-thiouridylase MnmA.